The following is a 503-amino-acid chain: Glutamate--tRNA ligase (503 aa).

Positions 26–36 (PSPTGTPHVGL) match the 'HIGH' region motif. A disordered region spans residues 126 to 148 (TPEEVEARHRAAGRDPKLGYDNA). The span at 130 to 148 (VEARHRAAGRDPKLGYDNA) shows a compositional bias: basic and acidic residues. The 'KMSKS' region signature appears at 270 to 274 (KLSKR). K273 serves as a coordination point for ATP.

This sequence belongs to the class-I aminoacyl-tRNA synthetase family. Glutamate--tRNA ligase type 1 subfamily. In terms of assembly, monomer.

It is found in the cytoplasm. It catalyses the reaction tRNA(Glu) + L-glutamate + ATP = L-glutamyl-tRNA(Glu) + AMP + diphosphate. In terms of biological role, catalyzes the attachment of glutamate to tRNA(Glu) in a two-step reaction: glutamate is first activated by ATP to form Glu-AMP and then transferred to the acceptor end of tRNA(Glu). This chain is Glutamate--tRNA ligase, found in Saccharopolyspora erythraea (strain ATCC 11635 / DSM 40517 / JCM 4748 / NBRC 13426 / NCIMB 8594 / NRRL 2338).